The following is a 322-amino-acid chain: uncharacterized protein (322 aa).

Residues 212–234 form a helical membrane-spanning segment; it reads VCALLVGAISVATAGAAFSIIIV.

Its subcellular location is the membrane. This is an uncharacterized protein from Rickettsia prowazekii (strain Madrid E).